The primary structure comprises 440 residues: Serine/threonine-protein kinase toxin HipA (440 aa).

Serine 150 bears the Phosphoserine; by autocatalysis mark. Residues 152–157, lysine 181, and 234–236 contribute to the ATP site; these read AGAQEK and ERF. Residue aspartate 309 is the Proton acceptor of the active site. Residues 311–314 and 331–332 contribute to the ATP site; these read HAKN and YD. The DNA-binding element occupies 379-382; it reads KVLR.

This sequence belongs to the HipA Ser/Thr kinase family. In terms of assembly, forms a HipA(2)HipB(2) heterotetramer which can interact with a single operator on DNA. When 2 operators are present each HipB dimer contacts 1 HipA molecule, which are brought together by the DNA bend and dimerize, blocking the HipA active site and inactivating its toxic activity. Mutations present in allele hipA7 (G22S and D291A) decrease the affinity of HipA for HipB. In terms of processing, autophosphorylates intermolecularly on Ser-150; phosphorylated form not seen to bind ATP and no longer has kinase activity.

It carries out the reaction L-seryl-[protein] + ATP = O-phospho-L-seryl-[protein] + ADP + H(+). The catalysed reaction is L-threonyl-[protein] + ATP = O-phospho-L-threonyl-[protein] + ADP + H(+). Once phosphorylated no longer has kinase activity. Toxic component of a type II toxin-antitoxin (TA) system, first identified by mutations that increase production of persister cells, a fraction of cells that are phenotypic variants not killed by antibiotics, which lead to multidrug tolerance. Persistence may be ultimately due to global remodeling of the persister cell's ribosomes. Phosphorylates Glu-tRNA-ligase (AC P04805, gltX, on 'Ser-239') in vivo. Phosphorylation of GltX prevents it from being charged, leading to an increase in uncharged tRNA(Glu). This induces amino acid starvation and the stringent response via RelA/SpoT and increased (p)ppGpp levels, which inhibits replication, transcription, translation and cell wall synthesis, reducing growth and leading to persistence and multidrug resistance. Once the level of HipA exceeds a threshold cells become dormant, and the length of dormancy is determined by how much HipA levels exceed the threshold. The hipA7 mutation (a double G22S D291A mutation) leads to increased generation of persister cells (cells that survive antibiotic treatment) probably by entering into a dormant state, as well as cold-sensitivity. Wild-type cells produce persisters at a frequency of 10(-6) to 10(-5) whereas hipA7 cells produce about 100-fold more persisters. hipA7 decreases the affinity for antitoxin HipB, leading to increased HipA levels and persistence; depending on the protein level, can be toxic enough to reduce cell growth or even kill cells. Generation of persister cells requires (p)ppGpp as cells lacking relA or relA/spoT generate fewer or no persister cells respectively compared to hipA7. The toxic effect of HipA is neutralized by its cognate antitoxin HipB. Also neutralized by overexpression of gltX. With HipB acts as a corepressor for transcription of the hipBA promoter; binding of HipA-HipB to DNA induces a 70 degree bend. This brings together and dimerizes 2 HipA molecules, which distorts the promoter region, preventing sigma-factor binding; additionally HipA and HipB would physically prevent RNA core polymerase from contacting the -35 promoter box. May play a role in biofilm formation. This is Serine/threonine-protein kinase toxin HipA (hipA) from Escherichia coli (strain K12).